The primary structure comprises 196 residues: Protein GrpE (196 aa).

The tract at residues 1–39 (MSSKEQKTPEGQAPEEIIMDQHEEIEAVEPEASAEQVDP) is disordered.

It belongs to the GrpE family. In terms of assembly, homodimer.

It is found in the cytoplasm. Its function is as follows. Participates actively in the response to hyperosmotic and heat shock by preventing the aggregation of stress-denatured proteins, in association with DnaK and GrpE. It is the nucleotide exchange factor for DnaK and may function as a thermosensor. Unfolded proteins bind initially to DnaJ; upon interaction with the DnaJ-bound protein, DnaK hydrolyzes its bound ATP, resulting in the formation of a stable complex. GrpE releases ADP from DnaK; ATP binding to DnaK triggers the release of the substrate protein, thus completing the reaction cycle. Several rounds of ATP-dependent interactions between DnaJ, DnaK and GrpE are required for fully efficient folding. This Escherichia coli (strain SMS-3-5 / SECEC) protein is Protein GrpE.